The sequence spans 1184 residues: uncharacterized protein (1184 aa).

Disordered regions lie at residues 115–152 and 397–426; these read ETSS…AHVS and TYKP…VPER. 2 stretches are compositionally biased toward polar residues: residues 137-152 and 397-421; these read HVMN…AHVS and TYKP…TSHN. Ser686 is subject to Phosphoserine. Composition is skewed to basic and acidic residues over residues 705–767, 783–792, 849–863, and 891–902; these read LSER…ESAH, FEHETEPSHY, SHAH…RDLG, and YLHDEKTRDTLT. Disordered regions lie at residues 705 to 870 and 890 to 1017; these read LSER…FGDV and DYLH…SSPK. Phosphoserine is present on Ser905. Basic and acidic residues predominate over residues 920–932; it reads EDHPHASEAERAH. Residues 941 to 950 are compositionally biased toward low complexity; it reads SSESSPESQS. Residues 999 to 1011 are compositionally biased toward basic and acidic residues; that stretch reads PRERLDDNAKEIL. Residue Ser1018 is modified to Phosphoserine. Disordered stretches follow at residues 1029-1107 and 1135-1154; these read NRKD…IGTQ and DVDN…KSRP. Basic and acidic residues predominate over residues 1032–1045; sequence DKAAVKRMLEEDSS. Residues 1073–1107 are compositionally biased toward polar residues; that stretch reads PAVNNSTKPVAVTSKNGHSRNGSHAAHSNNVIGTQ. Residues 1138 to 1150 are compositionally biased toward low complexity; that stretch reads NVVSGHSNVNGVS.

The protein localises to the cytoplasm. This is an uncharacterized protein from Schizosaccharomyces pombe (strain 972 / ATCC 24843) (Fission yeast).